The chain runs to 310 residues: Methionyl-tRNA formyltransferase (310 aa).

Position 109–112 (109–112 (SLLP)) interacts with (6S)-5,6,7,8-tetrahydrofolate.

The protein belongs to the Fmt family.

The catalysed reaction is L-methionyl-tRNA(fMet) + (6R)-10-formyltetrahydrofolate = N-formyl-L-methionyl-tRNA(fMet) + (6S)-5,6,7,8-tetrahydrofolate + H(+). Attaches a formyl group to the free amino group of methionyl-tRNA(fMet). The formyl group appears to play a dual role in the initiator identity of N-formylmethionyl-tRNA by promoting its recognition by IF2 and preventing the misappropriation of this tRNA by the elongation apparatus. In Pseudomonas putida (strain ATCC 700007 / DSM 6899 / JCM 31910 / BCRC 17059 / LMG 24140 / F1), this protein is Methionyl-tRNA formyltransferase.